We begin with the raw amino-acid sequence, 358 residues long: Peptide chain release factor 1 (358 aa).

Gln233 bears the N5-methylglutamine mark.

Belongs to the prokaryotic/mitochondrial release factor family. Methylated by PrmC. Methylation increases the termination efficiency of RF1.

The protein localises to the cytoplasm. Functionally, peptide chain release factor 1 directs the termination of translation in response to the peptide chain termination codons UAG and UAA. The sequence is that of Peptide chain release factor 1 from Geobacillus kaustophilus (strain HTA426).